Reading from the N-terminus, the 890-residue chain is Nitrate reductase [NADH] 2 (890 aa).

Cysteine 165 contributes to the Mo-molybdopterin binding site. The 76-residue stretch at 513–588 folds into the Cytochrome b5 heme-binding domain; it reads SKMFSVSEVK…LEDYRIGELI (76 aa). Residues histidine 548 and histidine 571 each contribute to the heme site. Positions 634 to 746 constitute an FAD-binding FR-type domain; sequence RQKIPCKLVS…KGPLGHIEYT (113 aa). Residues 686-689, 703-707, phenylalanine 708, phenylalanine 715, 720-722, and threonine 773 contribute to the FAD site; these read RAYT, LIKVY, and LMS.

It belongs to the nitrate reductase family. In terms of assembly, homodimer. FAD is required as a cofactor. Requires heme as cofactor. The cofactor is Mo-molybdopterin.

It catalyses the reaction nitrite + NAD(+) + H2O = nitrate + NADH + H(+). Functionally, nitrate reductase is a key enzyme involved in the first step of nitrate assimilation in plants, fungi and bacteria. The sequence is that of Nitrate reductase [NADH] 2 (NIA2) from Phaseolus vulgaris (Kidney bean).